We begin with the raw amino-acid sequence, 357 residues long: Chorismate synthase (357 aa).

An NADP(+)-binding site is contributed by arginine 47. FMN-binding positions include 123–125 (RAS), glycine 281, 296–300 (KPTSS), and arginine 324.

Belongs to the chorismate synthase family. As to quaternary structure, homotetramer. It depends on FMNH2 as a cofactor.

It catalyses the reaction 5-O-(1-carboxyvinyl)-3-phosphoshikimate = chorismate + phosphate. It functions in the pathway metabolic intermediate biosynthesis; chorismate biosynthesis; chorismate from D-erythrose 4-phosphate and phosphoenolpyruvate: step 7/7. Functionally, catalyzes the anti-1,4-elimination of the C-3 phosphate and the C-6 proR hydrogen from 5-enolpyruvylshikimate-3-phosphate (EPSP) to yield chorismate, which is the branch point compound that serves as the starting substrate for the three terminal pathways of aromatic amino acid biosynthesis. This reaction introduces a second double bond into the aromatic ring system. This chain is Chorismate synthase, found in Chlamydia trachomatis serovar D (strain ATCC VR-885 / DSM 19411 / UW-3/Cx).